We begin with the raw amino-acid sequence, 323 residues long: Elongation factor P--(R)-beta-lysine ligase (323 aa).

Residue 76-78 (SPE) participates in substrate binding. ATP contacts are provided by residues 100-102 (RNE) and asparagine 109. A substrate-binding site is contributed by tyrosine 118. 242-243 (EL) provides a ligand contact to ATP. Glutamate 249 lines the substrate pocket. Glycine 298 is an ATP binding site.

The protein belongs to the class-II aminoacyl-tRNA synthetase family. EpmA subfamily. As to quaternary structure, homodimer.

It carries out the reaction D-beta-lysine + L-lysyl-[protein] + ATP = N(6)-((3R)-3,6-diaminohexanoyl)-L-lysyl-[protein] + AMP + diphosphate + H(+). In terms of biological role, with EpmB is involved in the beta-lysylation step of the post-translational modification of translation elongation factor P (EF-P). Catalyzes the ATP-dependent activation of (R)-beta-lysine produced by EpmB, forming a lysyl-adenylate, from which the beta-lysyl moiety is then transferred to the epsilon-amino group of a conserved specific lysine residue in EF-P. This is Elongation factor P--(R)-beta-lysine ligase from Histophilus somni (strain 129Pt) (Haemophilus somnus).